The following is a 796-amino-acid chain: Ent-copalyl diphosphate synthase 4 (796 aa).

The N-terminal 23 residues, 1–23 (MSSSSIVTSLLRPTTAADGVLPR), are a transit peptide targeting the chloroplast. K240 contacts substrate. Mg(2+)-binding residues include D371 and D373. The DXDD motif motif lies at 371 to 374 (DVDD). K457 is a binding site for substrate.

It belongs to the terpene synthase family. Tpsc subfamily. Mg(2+) is required as a cofactor. In terms of tissue distribution, highly expressed in leaves, and, at low levels, in stems, but barely in roots and flowers.

The protein resides in the plastid. It is found in the chloroplast. The catalysed reaction is (2E,6E,10E)-geranylgeranyl diphosphate = ent-copalyl diphosphate. It functions in the pathway secondary metabolite biosynthesis; terpenoid biosynthesis. Functionally, involved in the biosynthesis of ent-kaurene diterpenoids natural products such as oridonin, miltiradiene, eriocalyxin B and nezukol, known to exhibit antitumor, anti-inflammatory and antibacterial activities. Catalyzes the conversion of (2E,6E,10E)-geranylgeranyl diphosphate (GGPP) to ent-copalyl diphosphate (ent-CPP). The protein is Ent-copalyl diphosphate synthase 4 of Isodon rubescens (Rabdosia rubescens).